We begin with the raw amino-acid sequence, 259 residues long: Acetylglutamate kinase (259 aa).

Substrate is bound by residues 46 to 47, Arg-68, and Asn-162; that span reads GG.

It belongs to the acetylglutamate kinase family. ArgB subfamily.

The protein resides in the cytoplasm. The enzyme catalyses N-acetyl-L-glutamate + ATP = N-acetyl-L-glutamyl 5-phosphate + ADP. The protein operates within amino-acid biosynthesis; L-arginine biosynthesis; N(2)-acetyl-L-ornithine from L-glutamate: step 2/4. Functionally, catalyzes the ATP-dependent phosphorylation of N-acetyl-L-glutamate. The protein is Acetylglutamate kinase of Roseiflexus castenholzii (strain DSM 13941 / HLO8).